Here is a 254-residue protein sequence, read N- to C-terminus: Sensory transduction protein LytR (254 aa).

The Response regulatory domain maps to 2 to 116 (RAIIVDDEPL…RIAQAVHKVE (115 aa)). The residue at position 53 (aspartate 53) is a 4-aspartylphosphate. The interval 120 to 143 (GQTTEHHSDSYTTASMDTQNNEKT) is disordered. Polar residues predominate over residues 129–138 (SYTTASMDTQ). Residues 149-253 (LPIEVNERIH…MKTFKQMMGL (105 aa)) form the HTH LytTR-type domain.

Phosphorylated by LytS.

The protein localises to the cytoplasm. Functionally, member of the two-component regulatory system LytR/LytS that probably regulates genes involved in cell wall metabolism. In Staphylococcus saprophyticus subsp. saprophyticus (strain ATCC 15305 / DSM 20229 / NCIMB 8711 / NCTC 7292 / S-41), this protein is Sensory transduction protein LytR (lytR).